Consider the following 492-residue polypeptide: Serine/threonine protein phosphatase 2A 57 kDa regulatory subunit B' theta isoform (492 aa).

Residues Met-1–Asn-63 form a disordered region. The span at Lys-16–Ser-39 shows a compositional bias: low complexity. A Microbody targeting signal motif is present at residues Ser-490–Leu-492.

It belongs to the phosphatase 2A regulatory subunit B56 family. PP2A consists of a common heteromeric enzyme, composed of a catalytic subunit (subunits C), a constant regulatory subunit (subunit A), and a variety of regulatory subunits such as subunits B (the R2/B/PR55/B55, R3/B''/PR72/PR130/PR59 and R5/B'/B56 families). Interacts with BZR1. Interacts with PP2A2, PP2A5 and PP2AA2. As to expression, highly expressed in dry seeds. Expressed in roots, cotyledons, rosette leaves and flowers.

It localises to the cytoplasm. The protein resides in the cytosol. It is found in the peroxisome. The B regulatory subunit may modulate substrate selectivity and catalytic activity, and may also direct the localization of the catalytic enzyme to a particular subcellular compartment. Associates with the serine/threonine-protein phosphatase PP2A catalytic subunit C and regulatory subunit A to positively regulates beta-oxidation of fatty acids and protoauxins in peroxisomes by dephosphorylating peroxisomal beta-oxidation-related proteins. Required for the formation of the PP2A holoenzyme that negatively regulates brassinosteroid signaling by dephosphorylating and inactivating BRI1 in the cytoplasm. This Arabidopsis thaliana (Mouse-ear cress) protein is Serine/threonine protein phosphatase 2A 57 kDa regulatory subunit B' theta isoform (B'THETA).